Consider the following 38-residue polypeptide: Photosystem II reaction center protein L (38 aa).

A helical membrane pass occupies residues 17–37; sequence SLFWGLLLIFVLAVLFSSYFF.

Belongs to the PsbL family. As to quaternary structure, PSII is composed of 1 copy each of membrane proteins PsbA, PsbB, PsbC, PsbD, PsbE, PsbF, PsbH, PsbI, PsbJ, PsbK, PsbL, PsbM, PsbT, PsbX, PsbY, PsbZ, Psb30/Ycf12, at least 3 peripheral proteins of the oxygen-evolving complex and a large number of cofactors. It forms dimeric complexes.

It localises to the plastid. The protein resides in the chloroplast thylakoid membrane. Its function is as follows. One of the components of the core complex of photosystem II (PSII). PSII is a light-driven water:plastoquinone oxidoreductase that uses light energy to abstract electrons from H(2)O, generating O(2) and a proton gradient subsequently used for ATP formation. It consists of a core antenna complex that captures photons, and an electron transfer chain that converts photonic excitation into a charge separation. This subunit is found at the monomer-monomer interface and is required for correct PSII assembly and/or dimerization. This Gracilaria tenuistipitata var. liui (Red alga) protein is Photosystem II reaction center protein L.